Here is a 265-residue protein sequence, read N- to C-terminus: Transcription factor BHLH062 (265 aa).

A disordered region spans residues 1 to 26 (MVPRDRVNAAAAGGGGEGRLVQSGIV). The basic motif; degenerate stretch occupies residues 35-48 (PKRIHKSEREKLKR). Residues 35-85 (PKRIHKSEREKLKRDKQNDLFNELGNLLEPDRQNNGKACVLGETTRILKDL) form the bHLH domain. The tract at residues 49-85 (DKQNDLFNELGNLLEPDRQNNGKACVLGETTRILKDL) is helix-loop-helix motif. Positions 75–130 (LGETTRILKDLLSQVESLRKENSSLKNESHYVALERNELHDDNSMLRTEILELQNE) form a coiled coil. Positions 200-265 (ESATSEDSEP…TNEEDRIGRS (66 aa)) are disordered. The segment covering 210–220 (SQEHGISDHVT) has biased composition (basic and acidic residues). Positions 245–256 (QDQQCSSGTSGT) are enriched in polar residues.

The protein belongs to the bHLH protein family. Interacts with TIFY11A/JAZ9.

Its subcellular location is the nucleus. In terms of biological role, transcription factor that plays a positive role in salt stress tolerance. Interacts with TIFY11A/JAZ9 and binds to the promoter of some potassium ion transporter genes to regulate potassium homeostasis during salt stress. The sequence is that of Transcription factor BHLH062 from Oryza sativa subsp. japonica (Rice).